We begin with the raw amino-acid sequence, 184 residues long: ATP synthase subunit b, chloroplastic (184 aa).

A helical membrane pass occupies residues 27-49 (LATNPINLSVVLGVLIFFGKGVL).

This sequence belongs to the ATPase B chain family. As to quaternary structure, F-type ATPases have 2 components, F(1) - the catalytic core - and F(0) - the membrane proton channel. F(1) has five subunits: alpha(3), beta(3), gamma(1), delta(1), epsilon(1). F(0) has four main subunits: a(1), b(1), b'(1) and c(10-14). The alpha and beta chains form an alternating ring which encloses part of the gamma chain. F(1) is attached to F(0) by a central stalk formed by the gamma and epsilon chains, while a peripheral stalk is formed by the delta, b and b' chains.

Its subcellular location is the plastid. The protein resides in the chloroplast thylakoid membrane. In terms of biological role, f(1)F(0) ATP synthase produces ATP from ADP in the presence of a proton or sodium gradient. F-type ATPases consist of two structural domains, F(1) containing the extramembraneous catalytic core and F(0) containing the membrane proton channel, linked together by a central stalk and a peripheral stalk. During catalysis, ATP synthesis in the catalytic domain of F(1) is coupled via a rotary mechanism of the central stalk subunits to proton translocation. Functionally, component of the F(0) channel, it forms part of the peripheral stalk, linking F(1) to F(0). This is ATP synthase subunit b, chloroplastic from Citrus sinensis (Sweet orange).